The following is a 953-amino-acid chain: Translation initiation factor IF-2 (953 aa).

2 disordered regions span residues 52 to 247 (KASK…LAEL) and 279 to 363 (TKLK…TERK). Composition is skewed to basic and acidic residues over residues 80-89 (TGSEHVEKTQ), 98-111 (FKAE…EQAA), and 140-188 (QGDK…ENHK). Polar residues predominate over residues 191–207 (RFTNQKKQGRQEPQSKS). Residues 229-247 (RQSETRFRAQQEAKRLAEL) are compositionally biased toward basic and acidic residues. A compositionally biased stretch (polar residues) spans 282–291 (KSSNISAKST). A compositionally biased stretch (basic and acidic residues) spans 300 to 317 (ARPEKNRELTHHSQEGQK). Residues 322–338 (SWNSQNQVRNQKNSNWN) show a composition bias toward low complexity. Positions 339–348 (KNKKTKKGKN) are enriched in basic residues. A tr-type G domain is found at 454 to 623 (ERAPVVTIMG…LLVAEVEELK (170 aa)). Positions 463-470 (GHVDHGKT) are G1. Residue 463–470 (GHVDHGKT) coordinates GTP. The segment at 488–492 (GITQH) is G2. Positions 509–512 (DTPG) are G3. GTP contacts are provided by residues 509–513 (DTPGH) and 563–566 (NKID). Positions 563-566 (NKID) are G4. The segment at 599–601 (SAK) is G5.

This sequence belongs to the TRAFAC class translation factor GTPase superfamily. Classic translation factor GTPase family. IF-2 subfamily.

It is found in the cytoplasm. Its function is as follows. One of the essential components for the initiation of protein synthesis. Protects formylmethionyl-tRNA from spontaneous hydrolysis and promotes its binding to the 30S ribosomal subunits. Also involved in the hydrolysis of GTP during the formation of the 70S ribosomal complex. The protein is Translation initiation factor IF-2 of Streptococcus pyogenes serotype M5 (strain Manfredo).